A 178-amino-acid polypeptide reads, in one-letter code: MNPLLQDYARILLEWNQTHNLSGARNLSELEPQITDALKPLEFVKDFKSCLDIGSGAGLPAIPLALEKPEAQFILLEPRVKRAAFLNYLKSVLPLNNIEIIKKRLEDYQNLLQVDLITSRAVASSSFLIEKSQRFLKDKGYFLFYKGEQLKNEIAYKTTECFMHQKRVYFYKSKESLC.

S-adenosyl-L-methionine contacts are provided by residues G54, L59, 105 to 106, and R120; that span reads LE.

The protein belongs to the methyltransferase superfamily. RNA methyltransferase RsmG family.

The protein resides in the cytoplasm. It catalyses the reaction guanosine(527) in 16S rRNA + S-adenosyl-L-methionine = N(7)-methylguanosine(527) in 16S rRNA + S-adenosyl-L-homocysteine. Its function is as follows. Specifically methylates the N7 position of guanine in position 527 of 16S rRNA. This Helicobacter pylori (strain J99 / ATCC 700824) (Campylobacter pylori J99) protein is Ribosomal RNA small subunit methyltransferase G.